The chain runs to 143 residues: uncharacterized protein (143 aa).

The next 4 helical transmembrane spans lie at 7–29, 52–74, 87–105, and 120–142; these read LFLF…LSLV, FSLY…NTYL, LGVF…LWAG, and WLGI…IRLG.

It localises to the cell membrane. This is an uncharacterized protein from Aquifex aeolicus (strain VF5).